Here is a 617-residue protein sequence, read N- to C-terminus: Protein 4.1 (617 aa).

The FERM domain maps to 1–282 (MHCKVSLLDD…EHHTFFRLTS (282 aa)). A Phosphotyrosine modification is found at Y13. T169 bears the Phosphothreonine mark. Residues 308 to 401 (TRQASALIDR…AEPEPSEAWK (94 aa)) are disordered. S312, S331, and S333 each carry phosphoserine. The segment covering 348 to 361 (RPTSAPAIAPSPAA) has biased composition (low complexity). A compositionally biased stretch (acidic residues) spans 387 to 396 (APPEDAEPEP). The tract at residues 401–466 (KKKRERLDGE…WDKRLSTHSP (66 aa)) is spectrin--actin-binding. The residue at position 413 (Y413) is a Phosphotyrosine; by EGFR. A phosphoserine mark is found at S417, S427, S437, and S462. Phosphoserine; by CDK1 is present on S465. A C-terminal (CTD) region spans residues 467–617 (FRTLNINGQI…VHQETEISEE (151 aa)). 2 positions are modified to phosphothreonine: T489 and T612.

As to quaternary structure, binds with a high affinity to glycophorin and with lower affinity to band III protein. Associates with the nuclear mitotic apparatus. Binds calmodulin, CPAP and DLG1. Also found to associate with contractile apparatus and tight junctions. Interacts with NUMA1; this interaction is negatively regulated by CDK1 during metaphase and promotes anaphase-specific localization of NUMA1 in symmetrically dividing cells. Interacts with ATP2B1; regulates small intestinal calcium absorption through regulation of membrane expression of ATP2B1. In terms of processing, phosphorylated at multiple sites by different protein kinases and each phosphorylation event selectively modulates the protein's functions. Phosphorylation on Tyr-413 reduces the ability of 4.1 to promote the assembly of the spectrin/actin/4.1 ternary complex.

The protein localises to the nucleus. Its subcellular location is the cytoplasm. The protein resides in the cytoskeleton. It is found in the cell cortex. Its function is as follows. Protein 4.1 is a major structural element of the erythrocyte membrane skeleton. It plays a key role in regulating membrane physical properties of mechanical stability and deformability by stabilizing spectrin-actin interaction. Recruits DLG1 to membranes. Required for dynein-dynactin complex and NUMA1 recruitment at the mitotic cell cortex during anaphase. The sequence is that of Protein 4.1 from Bos taurus (Bovine).